The following is a 175-amino-acid chain: UPF0398 protein SUB1405 (175 aa).

It belongs to the UPF0398 family.

In Streptococcus uberis (strain ATCC BAA-854 / 0140J), this protein is UPF0398 protein SUB1405.